Reading from the N-terminus, the 116-residue chain is Large ribosomal subunit protein bL17 (116 aa).

Belongs to the bacterial ribosomal protein bL17 family. Part of the 50S ribosomal subunit. Contacts protein L32.

This Sulfurimonas denitrificans (strain ATCC 33889 / DSM 1251) (Thiomicrospira denitrificans (strain ATCC 33889 / DSM 1251)) protein is Large ribosomal subunit protein bL17.